The following is a 499-amino-acid chain: Glucose-6-phosphate exchanger SLC37A2 (499 aa).

A helical transmembrane segment spans residues 21–40 (YRGFIIVMTFLFYTCYHMSR). 3 N-linked (GlcNAc...) asparagine glycosylation sites follow: asparagine 53, asparagine 62, and asparagine 66. 11 consecutive transmembrane segments (helical) span residues 86–106 (GSLDTAFLVSYAIGMFFSGIF), 116–136 (LSGGMIICGIFTSFMGLGYYW), 138–158 (IHALWYYILFQILNGLAQTTG), 187–207 (AVGNILGSLIAGAFVSTAWGL), 208–228 (SFIVPGIIIAAFGIFCFFFLV), 302–322 (LCLLFAKLVSYTFLYWLPLYI), 334–354 (GDLSTLFDVGGIIGGILAGGI), 362–382 (AITCTIMLILTAPMLFIYNYL), 391–411 (VAMLIVCGILVNGPYSLITTA), 434–454 (AIIDGSGSIGAALGPSLAGVL), and 458–478 (GWNYVFYMLIAADICACLLLV).

This sequence belongs to the major facilitator superfamily. Organophosphate:Pi antiporter (OPA) (TC 2.A.1.4) family.

It localises to the endoplasmic reticulum membrane. It carries out the reaction D-glucose 6-phosphate(in) + phosphate(out) = D-glucose 6-phosphate(out) + phosphate(in). Inorganic phosphate and glucose-6-phosphate antiporter. May transport cytoplasmic glucose-6-phosphate into the lumen of the endoplasmic reticulum and translocate inorganic phosphate into the opposite direction. In Xenopus tropicalis (Western clawed frog), this protein is Glucose-6-phosphate exchanger SLC37A2.